Here is a 463-residue protein sequence, read N- to C-terminus: MNMQEDKSIIEVSHVSKFFGDKTALDDVTLNVKKGEFVTILGPSGCGKTTLLRLIAGFQTASEGEIRISGKEITQTPPHKRPVNTVFQKYALFPHLNVYDNIAFGLKLKKTPKQTIGKKVKAALKMVGMTDYEYRDVDSLSGGQQQRVAIARAIVNEPEVLLLDEPLAALDLKMRKDMQMELKEMHKSLGITFVYVTHDQEEALTLSDTIVVMSEGKIQQIGTPIDIYNEPINSFVADFIGESNILNGTMIHDKLVRFCGTEFECVDEGFGENTPVDVVIRPEDLYIFPVSEMAQLTGVVQTSIFKGVHYEMTVLCGGYEFLVQDYHHFEVGAEVGLLVKPFDIHIMKKERVCNTFEGKLQDATHVEFLGCTFECASVEGLESGTDVKVEVDFDKVILQDNEEDGTLTGEVKFILYKGDHYHLTVWSDWDENVFVDTNDVWDDGDRVGITIPPDAIRVIKITD.

The ABC transporter domain maps to 10-240; that stretch reads IEVSHVSKFF…PINSFVADFI (231 aa). ATP is bound at residue 42-49; that stretch reads GPSGCGKT.

Belongs to the ABC transporter superfamily. Spermidine/putrescine importer (TC 3.A.1.11.1) family. The complex is composed of two ATP-binding proteins (PotA), two transmembrane proteins (PotB and PotC) and a solute-binding protein (PotD).

It localises to the cell inner membrane. The catalysed reaction is ATP + H2O + polyamine-[polyamine-binding protein]Side 1 = ADP + phosphate + polyamineSide 2 + [polyamine-binding protein]Side 1.. In terms of biological role, part of the ABC transporter complex PotABCD involved in spermidine/putrescine import. Responsible for energy coupling to the transport system. In Bacteroides thetaiotaomicron (strain ATCC 29148 / DSM 2079 / JCM 5827 / CCUG 10774 / NCTC 10582 / VPI-5482 / E50), this protein is Spermidine/putrescine import ATP-binding protein PotA.